Here is a 333-residue protein sequence, read N- to C-terminus: Transaldolase NQM1 (333 aa).

Lys-144 serves as the catalytic Schiff-base intermediate with substrate.

Belongs to the transaldolase family. Type 1 subfamily. As to quaternary structure, homodimer.

It carries out the reaction D-sedoheptulose 7-phosphate + D-glyceraldehyde 3-phosphate = D-erythrose 4-phosphate + beta-D-fructose 6-phosphate. It participates in carbohydrate degradation; pentose phosphate pathway; D-glyceraldehyde 3-phosphate and beta-D-fructose 6-phosphate from D-ribose 5-phosphate and D-xylulose 5-phosphate (non-oxidative stage): step 2/3. Functionally, transaldolase is important for the balance of metabolites in the pentose-phosphate pathway. The polypeptide is Transaldolase NQM1 (NQM1) (Saccharomyces cerevisiae (strain ATCC 204508 / S288c) (Baker's yeast)).